The following is a 622-amino-acid chain: DNA-directed RNA polymerase subunit gamma (622 aa).

4 residues coordinate Zn(2+): C70, C72, C85, and C88. Mg(2+)-binding residues include D466, D468, and D470.

Belongs to the RNA polymerase beta' chain family. RpoC1 subfamily. In cyanobacteria the RNAP catalytic core is composed of 2 alpha, 1 beta, 1 beta', 1 gamma and 1 omega subunit. When a sigma factor is associated with the core the holoenzyme is formed, which can initiate transcription. Requires Mg(2+) as cofactor. Zn(2+) serves as cofactor.

It catalyses the reaction RNA(n) + a ribonucleoside 5'-triphosphate = RNA(n+1) + diphosphate. Its function is as follows. DNA-dependent RNA polymerase catalyzes the transcription of DNA into RNA using the four ribonucleoside triphosphates as substrates. This Cyanothece sp. (strain PCC 7425 / ATCC 29141) protein is DNA-directed RNA polymerase subunit gamma.